We begin with the raw amino-acid sequence, 491 residues long: Ketol-acid reductoisomerase (NADP(+)) (491 aa).

In terms of domain architecture, KARI N-terminal Rossmann spans 15-208 (AQLGKCRFMG…GGHRAGVLES (194 aa)). Residues 45–48 (CGAQ), Arg-68, Arg-76, Ser-78, and 108–110 (DKQ) contribute to the NADP(+) site. His-132 is an active-site residue. Gly-158 lines the NADP(+) pocket. 2 consecutive KARI C-terminal knotted domains span residues 209–344 (SFVA…TAPQ) and 345–484 (FEGK…MTDM). Residues Asp-217, Glu-221, Glu-389, and Glu-393 each coordinate Mg(2+). Ser-414 is a substrate binding site.

It belongs to the ketol-acid reductoisomerase family. Mg(2+) is required as a cofactor.

The enzyme catalyses (2R)-2,3-dihydroxy-3-methylbutanoate + NADP(+) = (2S)-2-acetolactate + NADPH + H(+). It carries out the reaction (2R,3R)-2,3-dihydroxy-3-methylpentanoate + NADP(+) = (S)-2-ethyl-2-hydroxy-3-oxobutanoate + NADPH + H(+). The protein operates within amino-acid biosynthesis; L-isoleucine biosynthesis; L-isoleucine from 2-oxobutanoate: step 2/4. It participates in amino-acid biosynthesis; L-valine biosynthesis; L-valine from pyruvate: step 2/4. Functionally, involved in the biosynthesis of branched-chain amino acids (BCAA). Catalyzes an alkyl-migration followed by a ketol-acid reduction of (S)-2-acetolactate (S2AL) to yield (R)-2,3-dihydroxy-isovalerate. In the isomerase reaction, S2AL is rearranged via a Mg-dependent methyl migration to produce 3-hydroxy-3-methyl-2-ketobutyrate (HMKB). In the reductase reaction, this 2-ketoacid undergoes a metal-dependent reduction by NADPH to yield (R)-2,3-dihydroxy-isovalerate. The sequence is that of Ketol-acid reductoisomerase (NADP(+)) from Salmonella choleraesuis (strain SC-B67).